A 198-amino-acid polypeptide reads, in one-letter code: MEHYISLFVKSVFIENMALSFFLGMCTFLAVSKKVSTAFGLGVAVTVVLGISVPVNQLVYSLILKDGALIDGVDLSFLNFITFIGVIAALVQILEMILDKYFPALYNALGIFLPLITVNCAIFGGVSFMVQRDYNFAESIVYGIGAGTGWMLAIVALAGITEKMKYADVPAGLRGLGITFITVGLMALGFMSFSGVQL.

The next 6 helical transmembrane spans lie at 11–31 (SVFIENMALSFFLGMCTFLAV), 35–55 (VSTAFGLGVAVTVVLGISVPV), 77–97 (FLNFITFIGVIAALVQILEMI), 110–130 (GIFLPLITVNCAIFGGVSFMV), 140–160 (IVYGIGAGTGWMLAIVALAGI), and 176–196 (LGITFITVGLMALGFMSFSGV).

Belongs to the NqrDE/RnfAE family. Composed of six subunits; NqrA, NqrB, NqrC, NqrD, NqrE and NqrF.

The protein resides in the cell inner membrane. The enzyme catalyses a ubiquinone + n Na(+)(in) + NADH + H(+) = a ubiquinol + n Na(+)(out) + NAD(+). Functionally, NQR complex catalyzes the reduction of ubiquinone-1 to ubiquinol by two successive reactions, coupled with the transport of Na(+) ions from the cytoplasm to the periplasm. NqrA to NqrE are probably involved in the second step, the conversion of ubisemiquinone to ubiquinol. The sequence is that of Na(+)-translocating NADH-quinone reductase subunit E from Histophilus somni (strain 2336) (Haemophilus somnus).